A 633-amino-acid polypeptide reads, in one-letter code: GTPase-activating protein GYP3 (633 aa).

A disordered region spans residues 26-127 (AFTVKSPSVP…HSDDLDLVPD (102 aa)). The span at 37 to 47 (FHDKMHSDHSS) shows a compositional bias: basic and acidic residues. Positions 99 to 115 (GEDDDDNNGDNGNEDLE) are enriched in acidic residues. S147 is modified (phosphoserine). Positions 223–456 (GIPAEWRGNA…RIWDCLFYEE (234 aa)) constitute a Rab-GAP TBC domain. S484 is modified (phosphoserine).

The protein localises to the cytoplasm. The protein resides in the bud. It localises to the bud neck. Functionally, regulates exocytosis by functioning as a GAP for SEC4. Stimulates specifically the GTPase activity of YPT6. Also required for efficient polarization of the actin patches. This is GTPase-activating protein GYP3 (MSB3) from Saccharomyces cerevisiae (strain ATCC 204508 / S288c) (Baker's yeast).